Consider the following 124-residue polypeptide: Small ribosomal subunit protein bS16 (124 aa).

Residues 81 to 90 (LKKRPARNNP) show a composition bias toward basic residues. The interval 81-124 (LKKRPARNNPHKGEPGKKAQERIAAAKQAAEDAAAAAEADSASE) is disordered. Residues 91-101 (HKGEPGKKAQE) are compositionally biased toward basic and acidic residues. Positions 102-124 (RIAAAKQAAEDAAAAAEADSASE) are enriched in low complexity.

This sequence belongs to the bacterial ribosomal protein bS16 family.

This Bartonella tribocorum (strain CIP 105476 / IBS 506) protein is Small ribosomal subunit protein bS16.